Consider the following 143-residue polypeptide: SsrA-binding protein (143 aa).

This sequence belongs to the SmpB family.

Its subcellular location is the cytoplasm. In terms of biological role, required for rescue of stalled ribosomes mediated by trans-translation. Binds to transfer-messenger RNA (tmRNA), required for stable association of tmRNA with ribosomes. tmRNA and SmpB together mimic tRNA shape, replacing the anticodon stem-loop with SmpB. tmRNA is encoded by the ssrA gene; the 2 termini fold to resemble tRNA(Ala) and it encodes a 'tag peptide', a short internal open reading frame. During trans-translation Ala-aminoacylated tmRNA acts like a tRNA, entering the A-site of stalled ribosomes, displacing the stalled mRNA. The ribosome then switches to translate the ORF on the tmRNA; the nascent peptide is terminated with the 'tag peptide' encoded by the tmRNA and targeted for degradation. The ribosome is freed to recommence translation, which seems to be the essential function of trans-translation. This is SsrA-binding protein from Deinococcus radiodurans (strain ATCC 13939 / DSM 20539 / JCM 16871 / CCUG 27074 / LMG 4051 / NBRC 15346 / NCIMB 9279 / VKM B-1422 / R1).